The primary structure comprises 77 residues: Omega-conotoxin-like SO-5 (77 aa).

Residues 1–22 (MKLTCVMIVAVLLLTACQLITA) form the signal peptide. A propeptide spanning residues 23–42 (DDSRGTQKHRSLRSTTKVSK) is cleaved from the precursor. Disulfide bonds link C46/C61, C53/C64, and C60/C71.

This sequence belongs to the conotoxin O1 superfamily. As to expression, expressed by the venom duct.

Its subcellular location is the secreted. In terms of biological role, omega-conotoxins act at presynaptic membranes, they bind and block voltage-gated calcium channels (Cav). The chain is Omega-conotoxin-like SO-5 (SO5) from Conus striatus (Striated cone).